Consider the following 374-residue polypeptide: Chaperone protein DnaJ (374 aa).

A J domain is found at 3–67 (DFYQILGVSR…ETRARYDQFG (65 aa)). The interval 99 to 118 (GQSSQGGRSQRRGPQQGDDL) is disordered. Residues 103-115 (QGGRSQRRGPQQG) show a composition bias toward low complexity. The CR-type zinc finger occupies 132 to 214 (GQQREINIPH…CGGNGVKQVR (83 aa)). Zn(2+) contacts are provided by cysteine 145, cysteine 148, cysteine 162, cysteine 165, cysteine 188, cysteine 191, cysteine 202, and cysteine 205. CXXCXGXG motif repeat units lie at residues 145–152 (CEVCRGTG), 162–169 (CTTCGGSG), 188–195 (CPTCNGVG), and 202–209 (CTSCGGNG).

This sequence belongs to the DnaJ family. In terms of assembly, homodimer. Zn(2+) serves as cofactor.

The protein localises to the cytoplasm. Its function is as follows. Participates actively in the response to hyperosmotic and heat shock by preventing the aggregation of stress-denatured proteins and by disaggregating proteins, also in an autonomous, DnaK-independent fashion. Unfolded proteins bind initially to DnaJ; upon interaction with the DnaJ-bound protein, DnaK hydrolyzes its bound ATP, resulting in the formation of a stable complex. GrpE releases ADP from DnaK; ATP binding to DnaK triggers the release of the substrate protein, thus completing the reaction cycle. Several rounds of ATP-dependent interactions between DnaJ, DnaK and GrpE are required for fully efficient folding. Also involved, together with DnaK and GrpE, in the DNA replication of plasmids through activation of initiation proteins. This chain is Chaperone protein DnaJ, found in Prochlorococcus marinus subsp. pastoris (strain CCMP1986 / NIES-2087 / MED4).